The sequence spans 66 residues: MAKGKDVRVRVILECTSCARNGGNKESRGISRYITQKNRHNTPSRLELRKFCPYCYKHTTHGEIKK.

This sequence belongs to the bacterial ribosomal protein bL33 family.

It localises to the plastid. It is found in the chloroplast. The polypeptide is Large ribosomal subunit protein bL33c (Ceratophyllum demersum (Rigid hornwort)).